The chain runs to 338 residues: Holliday junction branch migration complex subunit RuvB (338 aa).

The tract at residues Met1–Tyr181 is large ATPase domain (RuvB-L). ATP contacts are provided by residues Leu20, Arg21, Gly62, Lys65, Thr66, Thr67, Glu128 to Phe130, Arg171, Tyr181, and Arg218. Thr66 serves as a coordination point for Mg(2+). Residues Ser182 to Gly252 form a small ATPAse domain (RuvB-S) region. A head domain (RuvB-H) region spans residues Ser255–Glu338. 2 residues coordinate DNA: Arg309 and Arg314.

The protein belongs to the RuvB family. Homohexamer. Forms an RuvA(8)-RuvB(12)-Holliday junction (HJ) complex. HJ DNA is sandwiched between 2 RuvA tetramers; dsDNA enters through RuvA and exits via RuvB. An RuvB hexamer assembles on each DNA strand where it exits the tetramer. Each RuvB hexamer is contacted by two RuvA subunits (via domain III) on 2 adjacent RuvB subunits; this complex drives branch migration. In the full resolvosome a probable DNA-RuvA(4)-RuvB(12)-RuvC(2) complex forms which resolves the HJ.

Its subcellular location is the cytoplasm. The catalysed reaction is ATP + H2O = ADP + phosphate + H(+). In terms of biological role, the RuvA-RuvB-RuvC complex processes Holliday junction (HJ) DNA during genetic recombination and DNA repair, while the RuvA-RuvB complex plays an important role in the rescue of blocked DNA replication forks via replication fork reversal (RFR). RuvA specifically binds to HJ cruciform DNA, conferring on it an open structure. The RuvB hexamer acts as an ATP-dependent pump, pulling dsDNA into and through the RuvAB complex. RuvB forms 2 homohexamers on either side of HJ DNA bound by 1 or 2 RuvA tetramers; 4 subunits per hexamer contact DNA at a time. Coordinated motions by a converter formed by DNA-disengaged RuvB subunits stimulates ATP hydrolysis and nucleotide exchange. Immobilization of the converter enables RuvB to convert the ATP-contained energy into a lever motion, pulling 2 nucleotides of DNA out of the RuvA tetramer per ATP hydrolyzed, thus driving DNA branch migration. The RuvB motors rotate together with the DNA substrate, which together with the progressing nucleotide cycle form the mechanistic basis for DNA recombination by continuous HJ branch migration. Branch migration allows RuvC to scan DNA until it finds its consensus sequence, where it cleaves and resolves cruciform DNA. This is Holliday junction branch migration complex subunit RuvB from Campylobacter curvus (strain 525.92).